The chain runs to 1667 residues: Androglobin (1667 aa).

Residues 1–11 are compositionally biased toward basic residues; the sequence is MASKQTKKKEV. 3 disordered regions span residues 1 to 45, 347 to 387, and 540 to 566; these read MASK…KGKF, SLTT…KFSL, and GSDL…ITKA. A Calpain catalytic domain is found at 70-411; the sequence is KDKTGKSPVF…SLSDCSSAIQ (342 aa). Basic and acidic residues predominate over residues 353–384; it reads APEKSDKVPKEKADARDIGKKRSKDGEKEKFK. Over residues 554–566 the composition is skewed to polar residues; it reads THSQTDLSQITKA. Positions 763–890 constitute a Globin; C-terminal part domain; that stretch reads HICSMVSFVI…EEVSLVEWLD (128 aa). Heme b-binding residues include Gln792 and His824. One can recognise an IQ domain in the interval 906–935; that stretch reads EVAAAIKIQAMWRGTYVRLLMKARIPDTKE. The 33-residue stretch at 936–968 folds into the Globin; N-terminal part domain; sequence NISVADTLQKVWAVLEMNLEQYAVSLLRLMFKS. Disordered regions lie at residues 1297–1355 and 1420–1522; these read INLG…QQED and TSDA…RSPT. Polar residues predominate over residues 1301–1315; the sequence is SPDSHTISEGQKSSV. Basic and acidic residues-rich tracts occupy residues 1325–1340 and 1433–1450; these read EKSS…KQAP and TKPK…KEPN. The segment covering 1451–1468 has biased composition (polar residues); that stretch reads SKNSAGSESKEMTQTGSG. The span at 1487 to 1498 shows a compositional bias: low complexity; sequence STSSESGGVSSP. The span at 1499-1511 shows a compositional bias: basic and acidic residues; it reads GKEEREQSTRKEN. The span at 1512 to 1522 shows a compositional bias: polar residues; sequence IQTGPRTRSPT. Residues 1588–1629 are a coiled coil; it reads QEERLKLKDEVLDMYKEMQDSLDEARQKIFDIREEYRNKLLE. Residues 1646-1667 form a disordered region; it reads KLETEKMTPAPDTQKKKKGKKK.

It in the central section; belongs to the globin family. In the N-terminal section; belongs to the peptidase C2 family. In terms of assembly, interacts with septin SEPT10; contributes to in vitro proteolytic cleavage of SEPT10 in a calmodulin-dependent manner. Interacts with CFAP69. Interacts with SPEF2. May interact with calmodulin.

Its subcellular location is the cell projection. It is found in the cilium. The protein resides in the flagellum. Its function is as follows. Probable chimeric globin with a bis-histidyl six-coordinate heme-iron atom through which it could bind dioxygen, carbon monoxide and nitric oxide. Required for sperm flagellum formation and maturation of elongating spermatids, thus playing an essential role in male fertility. The polypeptide is Androglobin (Homo sapiens (Human)).